Here is a 174-residue protein sequence, read N- to C-terminus: Large ribosomal subunit protein uL10 (174 aa).

The protein belongs to the universal ribosomal protein uL10 family. As to quaternary structure, part of the ribosomal stalk of the 50S ribosomal subunit. The N-terminus interacts with L11 and the large rRNA to form the base of the stalk. The C-terminus forms an elongated spine to which L12 dimers bind in a sequential fashion forming a multimeric L10(L12)X complex.

Forms part of the ribosomal stalk, playing a central role in the interaction of the ribosome with GTP-bound translation factors. This chain is Large ribosomal subunit protein uL10, found in Geobacter metallireducens (strain ATCC 53774 / DSM 7210 / GS-15).